We begin with the raw amino-acid sequence, 232 residues long: Ubiquinone biosynthesis O-methyltransferase (232 aa).

S-adenosyl-L-methionine contacts are provided by R36, G55, D76, and L120.

The protein belongs to the methyltransferase superfamily. UbiG/COQ3 family.

The catalysed reaction is a 3-demethylubiquinol + S-adenosyl-L-methionine = a ubiquinol + S-adenosyl-L-homocysteine + H(+). It catalyses the reaction a 3-(all-trans-polyprenyl)benzene-1,2-diol + S-adenosyl-L-methionine = a 2-methoxy-6-(all-trans-polyprenyl)phenol + S-adenosyl-L-homocysteine + H(+). It participates in cofactor biosynthesis; ubiquinone biosynthesis. Its function is as follows. O-methyltransferase that catalyzes the 2 O-methylation steps in the ubiquinone biosynthetic pathway. The sequence is that of Ubiquinone biosynthesis O-methyltransferase from Pseudomonas putida (strain ATCC 700007 / DSM 6899 / JCM 31910 / BCRC 17059 / LMG 24140 / F1).